Consider the following 81-residue polypeptide: Keratin-associated protein 19-3 (81 aa).

Belongs to the KRTAP type 19 family. As to quaternary structure, interacts with hair keratins.

In the hair cortex, hair keratin intermediate filaments are embedded in an interfilamentous matrix, consisting of hair keratin-associated proteins (KRTAP), which are essential for the formation of a rigid and resistant hair shaft through their extensive disulfide bond cross-linking with abundant cysteine residues of hair keratins. The matrix proteins include the high-sulfur and high-glycine-tyrosine keratins. This Homo sapiens (Human) protein is Keratin-associated protein 19-3 (KRTAP19-3).